Here is a 551-residue protein sequence, read N- to C-terminus: Tetrachloroethene reductive dehalogenase (551 aa).

The tat-type signal signal peptide spans 1–39 (MGEINRRNFLKVSILGAAAAAVASASAVKGMVSPLVADA). Residues 411–440 (PRKFGVREFCRLCKKCADACPAQAISHEKD) form the 4Fe-4S ferredoxin-type 1 domain. Positions 420, 423, 426, 430, 467, 478, 481, and 485 each coordinate [4Fe-4S] cluster. One can recognise a 4Fe-4S ferredoxin-type 2 domain in the interval 478–496 (CSNCVAVCSWNKVETWNHD).

Belongs to the PceA family. [4Fe-4S] cluster is required as a cofactor. Requires corrinoid as cofactor. Predicted to be exported by the Tat system. The position of the signal peptide cleavage has been experimentally proven.

It localises to the cytoplasm. The protein localises to the cell membrane. Its subcellular location is the secreted. It carries out the reaction trichloroethene + chloride + A + H(+) = tetrachloroethene + AH2. It catalyses the reaction trichloroethene + AH2 = (Z)-1,2-dichloroethene + chloride + A + H(+). Its activity is regulated as follows. PceT is required as a chaperone for prePceA maturation. In the absence or presence of exogenous vitamin B12, the intracellular corrinoid level decreases in fumarate-grown cells and the PceA precursor forms catalytically inactive, corrinoid-free multiprotein aggregates. Exogenous vitamin B12 is not incorporated into the PceA precursor, even though it affects the transposition of the pce gene cluster. Catalyzes the reductive dechlorination of tetrachloroethene (PCE) to trichloroethene (TCE) and of trichloroethene to cis-1,2-dichloroethene (DCE). Can also use various chlorinated ethanes such as tetrachloroethane, pentachloroethane and hexachloroethane. Reduced methyl viologen can act as the artificial electron donor. In Desulfitobacterium hafniense (strain Y51), this protein is Tetrachloroethene reductive dehalogenase.